Reading from the N-terminus, the 299-residue chain is MQTGQIIRALSGFYDVQSEHKIYRTRARGNFRKRKITPLVGDFVEFESESQTESGYILEILDRKNEMIRPPVANIDQAVVIVSAVEPDFSLNLLDRFLIYLESLNIQGLVYLTKTDMISDEKYQEIKQYLDYYEKVGYPTFAPRTAFTPEIIQAIEDTFPDKTTVFTGQTGAGKSTLLNHIDPKLNLATAEISQSLNRGKHTTRHIELIPLNDGLVGDTPGFSSLGILNVTSETLVSRYPEFREIGQDCKFRTCQHVMEPKCAVKAAVDAGEIMQSRYTNYLQFRAELKDIRPVYKKSK.

Positions 64 to 225 (KNEMIRPPVA…VGDTPGFSSL (162 aa)) constitute a CP-type G domain. Residues 113-116 (TKTD) and 168-176 (GQTGAGKST) contribute to the GTP site. Zn(2+) contacts are provided by Cys-249, Cys-254, His-256, and Cys-262.

This sequence belongs to the TRAFAC class YlqF/YawG GTPase family. RsgA subfamily. Monomer. Associates with 30S ribosomal subunit, binds 16S rRNA. Zn(2+) is required as a cofactor.

It is found in the cytoplasm. Functionally, one of several proteins that assist in the late maturation steps of the functional core of the 30S ribosomal subunit. Helps release RbfA from mature subunits. May play a role in the assembly of ribosomal proteins into the subunit. Circularly permuted GTPase that catalyzes slow GTP hydrolysis, GTPase activity is stimulated by the 30S ribosomal subunit. The sequence is that of Small ribosomal subunit biogenesis GTPase RsgA from Latilactobacillus sakei subsp. sakei (strain 23K) (Lactobacillus sakei subsp. sakei).